The following is a 166-amino-acid chain: Cofilin-1 (166 aa).

Ala-2 carries the N-acetylalanine modification. Phosphoserine is present on residues Ser-3 and Ser-8. Residues 4–153 (GVAVSDGVIK…KDRCTLAEKL (150 aa)) enclose the ADF-H domain. An N6-acetyllysine modification is found at Lys-13. At Thr-25 the chain carries Phosphothreonine. Residues 30–34 (KKRKK) carry the Nuclear localization signal motif. Ser-41 is modified (phosphoserine). Position 68 is a phosphotyrosine (Tyr-68). An N6-acetyllysine modification is found at Lys-73. Lys-132 is covalently cross-linked (Glycyl lysine isopeptide (Lys-Gly) (interchain with G-Cter in SUMO2)). Residue Tyr-140 is modified to Phosphotyrosine. Lys-144 bears the N6-acetyllysine mark. The residue at position 156 (Ser-156) is a Phosphoserine.

Belongs to the actin-binding proteins ADF family. Can bind G- and F-actin in a 1:1 ratio of cofilin to actin. It is a major component of intranuclear and cytoplasmic actin rods. Interacts with the subcortical maternal complex (SCMC) via interaction with TLE6 and NLRP5. Interacts with C9orf72. Inactivated by phosphorylation on Ser-3. Phosphorylated on Ser-3 in resting cells. Dephosphorylated by PDXP/chronophin; this restores its activity in promoting actin filament depolymerization. The phosphorylation of Ser-24 may prevent recognition of the nuclear localization signal. Phosphorylated via a ARRB1-RAC1-LIMK1-PAK1 cascade upon active ligand stimulation of atypical chemokine receptor ACKR2.

The protein resides in the nucleus matrix. Its subcellular location is the cytoplasm. It localises to the cytoskeleton. The protein localises to the cell projection. It is found in the ruffle membrane. The protein resides in the lamellipodium membrane. Its subcellular location is the lamellipodium. It localises to the growth cone. The protein localises to the axon. Functionally, binds to F-actin and exhibits pH-sensitive F-actin depolymerizing activity. Important for normal progress through mitosis and normal cytokinesis. In conjunction with the subcortical maternal complex (SCMC), plays an essential role for zygotes to progress beyond the first embryonic cell divisions via regulation of actin dynamics. Required for the centralization of the mitotic spindle and symmetric division of zygotes. Plays a role in the regulation of cell morphology and cytoskeletal organization in epithelial cells. Required for the up-regulation of atypical chemokine receptor ACKR2 from endosomal compartment to cell membrane, increasing its efficiency in chemokine uptake and degradation. Required for neural tube morphogenesis and neural crest cell migration. The chain is Cofilin-1 (CFL1) from Bos taurus (Bovine).